Consider the following 233-residue polypeptide: MKKLTKKQNLFKTFLNHTKKYDIDEGITLLKKMATSKFIESLDVAINLGINPKNTNQNIRNTTILPHGIGRLIKVAVFTQGENEKIAKKFGAEFVGLHNLIETVKTKTILFDVAIATPDVMPYVSQLGPILGPRGLMPNPKLGTITEKLEYAIKNAKSGQIHYKNDKNGIIHISIGKINFENTKIKENLNALISSLKQSKPSQSKGTYIKQVVISTTMSSGIKIDLNTLNNAS.

It belongs to the universal ribosomal protein uL1 family. In terms of assembly, part of the 50S ribosomal subunit.

Functionally, binds directly to 23S rRNA. The L1 stalk is quite mobile in the ribosome, and is involved in E site tRNA release. In terms of biological role, protein L1 is also a translational repressor protein, it controls the translation of the L11 operon by binding to its mRNA. The polypeptide is Large ribosomal subunit protein uL1 (Buchnera aphidicola subsp. Baizongia pistaciae (strain Bp)).